A 456-amino-acid polypeptide reads, in one-letter code: Adenylosuccinate synthetase isozyme 2 (456 aa).

Residues 1-24 (MAFAETYPAASSLPNGDCGRPRAR) are disordered. GTP contacts are provided by residues 39–45 (GDEGKGK) and 67–69 (GHT). D40 serves as the catalytic Proton acceptor. Mg(2+) is bound by residues D40 and G67. Substrate is bound at residue D40. IMP is bound by residues 40 to 43 (DEGK), 65 to 68 (NAGH), T162, R176, N255, T270, and R334. H68 acts as the Proton donor in catalysis. 330-336 (VTTGRKR) contacts substrate. GTP is bound by residues R336, 362 to 364 (KLD), and 444 to 447 (GVGK).

It belongs to the adenylosuccinate synthetase family. Homodimer. The cofactor is Mg(2+).

The protein resides in the cytoplasm. Its subcellular location is the mitochondrion. It carries out the reaction IMP + L-aspartate + GTP = N(6)-(1,2-dicarboxyethyl)-AMP + GDP + phosphate + 2 H(+). It functions in the pathway purine metabolism; AMP biosynthesis via de novo pathway; AMP from IMP: step 1/2. Inhibited competitively by AMP and IMP and non-competitively by fructose 1,6-bisphosphate. Its function is as follows. Plays an important role in the de novo pathway and in the salvage pathway of purine nucleotide biosynthesis. Catalyzes the first committed step in the biosynthesis of AMP from IMP. The protein is Adenylosuccinate synthetase isozyme 2 of Homo sapiens (Human).